Reading from the N-terminus, the 491-residue chain is Cytochrome P450 2F5 (491 aa).

Cys-436 provides a ligand contact to heme.

Belongs to the cytochrome P450 family. Requires heme as cofactor.

It localises to the endoplasmic reticulum membrane. The protein localises to the microsome membrane. The enzyme catalyses an organic molecule + reduced [NADPH--hemoprotein reductase] + O2 = an alcohol + oxidized [NADPH--hemoprotein reductase] + H2O + H(+). In terms of biological role, cytochromes P450 are a group of heme-thiolate monooxygenases. In liver microsomes, this enzyme is involved in an NADPH-dependent electron transport pathway. It oxidizes a variety of structurally unrelated compounds, including steroids, fatty acids, and xenobiotics. The sequence is that of Cytochrome P450 2F5 (CYP2F5) from Gorilla gorilla gorilla (Western lowland gorilla).